The chain runs to 590 residues: UvrABC system protein C (590 aa).

A GIY-YIG domain is found at 15–92 (DLPGCYMMKD…IQKHKPYYNI (78 aa)). The 36-residue stretch at 197 to 232 (SKIKKELEQKMETASENLEFERAAEIRDQIHYVEMT) folds into the UVR domain.

This sequence belongs to the UvrC family. As to quaternary structure, interacts with UvrB in an incision complex.

It localises to the cytoplasm. Functionally, the UvrABC repair system catalyzes the recognition and processing of DNA lesions. UvrC both incises the 5' and 3' sides of the lesion. The N-terminal half is responsible for the 3' incision and the C-terminal half is responsible for the 5' incision. The sequence is that of UvrABC system protein C from Ligilactobacillus salivarius (strain UCC118) (Lactobacillus salivarius).